Here is a 268-residue protein sequence, read N- to C-terminus: Small ribosomal subunit protein uS2 (268 aa).

The tract at residues 233 to 268 is disordered; the sequence is SVREEEFAEAAAEGEEKPARRAPAKKAAKKGDDAQA.

The protein belongs to the universal ribosomal protein uS2 family.

This chain is Small ribosomal subunit protein uS2, found in Stenotrophomonas maltophilia (strain K279a).